A 272-amino-acid polypeptide reads, in one-letter code: Tryptophan synthase alpha chain (272 aa).

Residues glutamate 49 and glutamate 60 each act as proton acceptor in the active site.

This sequence belongs to the TrpA family. As to quaternary structure, tetramer of two alpha and two beta chains.

It carries out the reaction (1S,2R)-1-C-(indol-3-yl)glycerol 3-phosphate + L-serine = D-glyceraldehyde 3-phosphate + L-tryptophan + H2O. It functions in the pathway amino-acid biosynthesis; L-tryptophan biosynthesis; L-tryptophan from chorismate: step 5/5. Functionally, the alpha subunit is responsible for the aldol cleavage of indoleglycerol phosphate to indole and glyceraldehyde 3-phosphate. This is Tryptophan synthase alpha chain from Legionella pneumophila subsp. pneumophila (strain Philadelphia 1 / ATCC 33152 / DSM 7513).